The primary structure comprises 177 residues: Large ribosomal subunit protein uL6 (177 aa).

Belongs to the universal ribosomal protein uL6 family. In terms of assembly, part of the 50S ribosomal subunit.

Functionally, this protein binds to the 23S rRNA, and is important in its secondary structure. It is located near the subunit interface in the base of the L7/L12 stalk, and near the tRNA binding site of the peptidyltransferase center. The protein is Large ribosomal subunit protein uL6 of Zymomonas mobilis subsp. mobilis (strain ATCC 31821 / ZM4 / CP4).